The sequence spans 166 residues: Small ribosomal subunit protein uS5 (166 aa).

The S5 DRBM domain occupies 11–74 (LIDKVVHISR…ESAKRTMFEV (64 aa)).

It belongs to the universal ribosomal protein uS5 family. In terms of assembly, part of the 30S ribosomal subunit. Contacts proteins S4 and S8.

With S4 and S12 plays an important role in translational accuracy. In terms of biological role, located at the back of the 30S subunit body where it stabilizes the conformation of the head with respect to the body. In Syntrophobacter fumaroxidans (strain DSM 10017 / MPOB), this protein is Small ribosomal subunit protein uS5.